Consider the following 333-residue polypeptide: D-fructose 1,6-bisphosphatase class 2/sedoheptulose 1,7-bisphosphatase (333 aa).

Mn(2+)-binding residues include aspartate 33, glutamate 57, aspartate 85, and glutamate 88. Residues 88-90 (EGT), tyrosine 119, 164-166 (RTR), and 186-188 (DGD) contribute to the substrate site. Residue glutamate 213 participates in Mn(2+) binding.

The protein belongs to the FBPase class 2 family. Homotetramer. Mn(2+) is required as a cofactor.

The catalysed reaction is beta-D-fructose 1,6-bisphosphate + H2O = beta-D-fructose 6-phosphate + phosphate. It catalyses the reaction D-sedoheptulose 1,7-bisphosphate + H2O = D-sedoheptulose 7-phosphate + phosphate. It functions in the pathway carbohydrate biosynthesis; Calvin cycle. In terms of biological role, catalyzes the hydrolysis of fructose 1,6-bisphosphate (Fru 1,6-P2) and sedoheptulose 1,7-bisphosphate (Sed 1,7-P2) to fructose 6-phosphate and sedoheptulose 7-phosphate, respectively. This is D-fructose 1,6-bisphosphatase class 2/sedoheptulose 1,7-bisphosphatase from Prochlorococcus marinus (strain MIT 9301).